The primary structure comprises 70 residues: Small ribosomal subunit protein bS21 (70 aa).

This sequence belongs to the bacterial ribosomal protein bS21 family.

The chain is Small ribosomal subunit protein bS21 from Campylobacter curvus (strain 525.92).